The following is a 158-amino-acid chain: uncharacterized protein (158 aa).

Residues 13-110 enclose the HTH hxlR-type domain; sequence ESVGRALELV…WGDEYLPRPE (98 aa).

This is an uncharacterized protein from Mycobacterium tuberculosis (strain CDC 1551 / Oshkosh).